An 86-amino-acid chain; its full sequence is Large ribosomal subunit protein bL27 (86 aa).

The tract at residues 1–26 is disordered; sequence MAHKKAAGSTRNGRDSESKRLGVKRY.

It belongs to the bacterial ribosomal protein bL27 family.

The sequence is that of Large ribosomal subunit protein bL27 from Marinobacter nauticus (strain ATCC 700491 / DSM 11845 / VT8) (Marinobacter aquaeolei).